A 401-amino-acid polypeptide reads, in one-letter code: tRNA(Met) cytidine acetate ligase (401 aa).

Residues 7–20 (VVEY…HLYH), G101, N160, and 185–186 (RI) contribute to the ATP site.

This sequence belongs to the TmcAL family.

The protein resides in the cytoplasm. The catalysed reaction is cytidine(34) in elongator tRNA(Met) + acetate + ATP = N(4)-acetylcytidine(34) in elongator tRNA(Met) + AMP + diphosphate. In terms of biological role, catalyzes the formation of N(4)-acetylcytidine (ac(4)C) at the wobble position of elongator tRNA(Met), using acetate and ATP as substrates. First activates an acetate ion to form acetyladenylate (Ac-AMP) and then transfers the acetyl group to tRNA to form ac(4)C34. The sequence is that of tRNA(Met) cytidine acetate ligase from Anoxybacillus flavithermus (strain DSM 21510 / WK1).